The chain runs to 126 residues: UPF0212 protein TON_0350 (126 aa).

The protein belongs to the UPF0212 family.

The polypeptide is UPF0212 protein TON_0350 (Thermococcus onnurineus (strain NA1)).